We begin with the raw amino-acid sequence, 896 residues long: Valine--tRNA ligase (896 aa).

Residues 43–53 carry the 'HIGH' region motif; sequence PNVTGSLHIGH. A 'KMSKS' region motif is present at residues 545 to 549; the sequence is KMSKS. ATP is bound at residue K548. Positions 831–857 form a coiled coil; sequence DLDAERARLAKGIAAAEKERDGLAARL.

The protein belongs to the class-I aminoacyl-tRNA synthetase family. ValS type 1 subfamily. Monomer.

The protein localises to the cytoplasm. It carries out the reaction tRNA(Val) + L-valine + ATP = L-valyl-tRNA(Val) + AMP + diphosphate. Functionally, catalyzes the attachment of valine to tRNA(Val). As ValRS can inadvertently accommodate and process structurally similar amino acids such as threonine, to avoid such errors, it has a 'posttransfer' editing activity that hydrolyzes mischarged Thr-tRNA(Val) in a tRNA-dependent manner. The protein is Valine--tRNA ligase of Rhizorhabdus wittichii (strain DSM 6014 / CCUG 31198 / JCM 15750 / NBRC 105917 / EY 4224 / RW1) (Sphingomonas wittichii).